The primary structure comprises 169 residues: Sorting nexin-24 (169 aa).

The residue at position 1 (Met-1) is an N-acetylmethionine. In terms of domain architecture, PX spans 1–125 (MEVYIPSFRY…SFDETESEES (125 aa)). 4 residues coordinate a 1,2-diacyl-sn-glycero-3-phospho-(1D-myo-inositol-3-phosphate): Arg-38, Ser-40, Lys-61, and Arg-74. Phosphoserine is present on residues Ser-113 and Ser-116.

The protein belongs to the sorting nexin family.

It localises to the cytoplasmic vesicle membrane. Its function is as follows. May be involved in several stages of intracellular trafficking. The protein is Sorting nexin-24 (SNX24) of Homo sapiens (Human).